We begin with the raw amino-acid sequence, 425 residues long: Oxytetracycline polyketide putative beta-ketoacyl synthase 1 (425 aa).

A Ketosynthase family 3 (KS3) domain is found at 7 to 420; the sequence is ARRVVITGIG…GFQSAIVLTE (414 aa). Residues cysteine 173, histidine 313, and histidine 350 each act as for beta-ketoacyl synthase activity in the active site.

The protein belongs to the thiolase-like superfamily. Beta-ketoacyl-ACP synthases family.

It participates in antibiotic biosynthesis; oxytetracycline biosynthesis. In Streptomyces rimosus, this protein is Oxytetracycline polyketide putative beta-ketoacyl synthase 1.